Here is a 389-residue protein sequence, read N- to C-terminus: 1-deoxy-D-xylulose 5-phosphate reductoisomerase (389 aa).

6 residues coordinate NADPH: Ser11, Gly12, Ser13, Val14, Asn39, and Asn122. Lys123 is a 1-deoxy-D-xylulose 5-phosphate binding site. NADPH is bound at residue Glu124. Mn(2+) is bound at residue Asp148. The 1-deoxy-D-xylulose 5-phosphate site is built by Ser149, Glu150, Ser174, and His197. Glu150 contacts Mn(2+). An NADPH-binding site is contributed by Gly203. Residues Ser210, Asn215, Lys216, and Glu219 each coordinate 1-deoxy-D-xylulose 5-phosphate. Position 219 (Glu219) interacts with Mn(2+).

This sequence belongs to the DXR family. The cofactor is Mg(2+). Mn(2+) is required as a cofactor.

The enzyme catalyses 2-C-methyl-D-erythritol 4-phosphate + NADP(+) = 1-deoxy-D-xylulose 5-phosphate + NADPH + H(+). It participates in isoprenoid biosynthesis; isopentenyl diphosphate biosynthesis via DXP pathway; isopentenyl diphosphate from 1-deoxy-D-xylulose 5-phosphate: step 1/6. Its function is as follows. Catalyzes the NADPH-dependent rearrangement and reduction of 1-deoxy-D-xylulose-5-phosphate (DXP) to 2-C-methyl-D-erythritol 4-phosphate (MEP). This is 1-deoxy-D-xylulose 5-phosphate reductoisomerase from Leptospira borgpetersenii serovar Hardjo-bovis (strain JB197).